The sequence spans 275 residues: Tryptophan synthase alpha chain (275 aa).

Active-site proton acceptor residues include Glu58 and Asp69.

It belongs to the TrpA family. Tetramer of two alpha and two beta chains. In terms of tissue distribution, ubiquitously expressed at low levels in seedlings, roots, hypocotyls, cotyledons, stems, leaves, inflorescences, flowers, siliques and seeds.

Its subcellular location is the cytoplasm. It carries out the reaction (1S,2R)-1-C-(indol-3-yl)glycerol 3-phosphate + L-serine = D-glyceraldehyde 3-phosphate + L-tryptophan + H2O. The catalysed reaction is (1S,2R)-1-C-(indol-3-yl)glycerol 3-phosphate = indole + D-glyceraldehyde 3-phosphate. It participates in amino-acid biosynthesis; L-tryptophan biosynthesis; L-tryptophan from chorismate: step 5/5. The alpha subunit is responsible for the aldol cleavage of indoleglycerol phosphate to indole and glyceraldehyde 3-phosphate. Contributes to the tryptophan-independent indole biosynthesis, and possibly to auxin production. This is Tryptophan synthase alpha chain (TRPA1) from Arabidopsis thaliana (Mouse-ear cress).